The chain runs to 100 residues: Enhancer of yellow 2 transcription factor (100 aa).

The protein belongs to the ENY2 family. As to quaternary structure, component of the nuclear pore complex (NPC)-associated AMEX complex (anchoring and mRNA export complex), composed of at least e(y)2 and xmas-2. Component of the SAGA transcription coactivator-HAT complexes, at least composed of Ada2b, e(y)2, Pcaf/Gcn5, Taf10 and Nipped-A/Trrap. Within the SAGA complex, e(y)2, Sgf11, and not/nonstop form an additional subcomplex of SAGA called the DUB module (deubiquitination module). Component of the THO complex, composed of at least e(y)2, HPR1, THO2, THOC5, THOC6 and THOC7. Interacts with e(y)1. Interacts with su(Hw) (via zinc fingers). Interacts with xmas-2; required for localization to the nuclear periphery. Interacts with the nuclear pore complex (NPC).

It localises to the nucleus. The protein localises to the nucleoplasm. Its subcellular location is the cytoplasm. In terms of biological role, involved in mRNA export coupled transcription activation by association with both the AMEX and the SAGA complexes. The SAGA complex is a multiprotein complex that activates transcription by remodeling chromatin and mediating histone acetylation and deubiquitination. Within the SAGA complex, participates in a subcomplex that specifically deubiquitinates histone H2B. The SAGA complex is recruited to specific gene promoters by activators, where it is required for transcription. Required for nuclear receptor-mediated transactivation. Involved in transcription elongation by recruiting the THO complex onto nascent mRNA. The AMEX complex functions in docking export-competent ribonucleoprotein particles (mRNPs) to the nuclear entrance of the nuclear pore complex (nuclear basket). AMEX participates in mRNA export and accurate chromatin positioning in the nucleus by tethering genes to the nuclear periphery. This chain is Enhancer of yellow 2 transcription factor, found in Drosophila pseudoobscura pseudoobscura (Fruit fly).